The following is a 1073-amino-acid chain: Carbamoyl phosphate synthase large chain (1073 aa).

The segment at 1–403 (MPKRTDIKSI…SLQKALRGLE (403 aa)) is carboxyphosphate synthetic domain. ATP is bound by residues R129, R169, G175, G176, E208, L210, E215, G241, V242, H243, Q285, and E299. The 196-residue stretch at 133–328 (DKAMKSIGLA…IARVAAKLAV (196 aa)) folds into the ATP-grasp 1 domain. Mg(2+) is bound by residues Q285, E299, and N301. 3 residues coordinate Mn(2+): Q285, E299, and N301. The interval 404-553 (VGVCGLDPKL…YSTYEEECEA (150 aa)) is oligomerization domain. Positions 554–935 (NPSTRDKIMI…AFAKAQMGAS (382 aa)) are carbamoyl phosphate synthetic domain. Positions 678-869 (QQMVERLNLR…LAMIAARVMA (192 aa)) constitute an ATP-grasp 2 domain. R714, H753, L755, E760, G785, V786, H787, S788, Q828, and E840 together coordinate ATP. Mg(2+) is bound by residues Q828, E840, and N842. Mn(2+) contacts are provided by Q828, E840, and N842. The MGS-like domain occupies 936 to 1073 (EVLPTGGTAF…LQDLHAGLKA (138 aa)). An allosteric domain region spans residues 936–1073 (EVLPTGGTAF…LQDLHAGLKA (138 aa)).

This sequence belongs to the CarB family. As to quaternary structure, composed of two chains; the small (or glutamine) chain promotes the hydrolysis of glutamine to ammonia, which is used by the large (or ammonia) chain to synthesize carbamoyl phosphate. Tetramer of heterodimers (alpha,beta)4. Requires Mg(2+) as cofactor. The cofactor is Mn(2+).

It catalyses the reaction hydrogencarbonate + L-glutamine + 2 ATP + H2O = carbamoyl phosphate + L-glutamate + 2 ADP + phosphate + 2 H(+). The catalysed reaction is hydrogencarbonate + NH4(+) + 2 ATP = carbamoyl phosphate + 2 ADP + phosphate + 2 H(+). It functions in the pathway amino-acid biosynthesis; L-arginine biosynthesis; carbamoyl phosphate from bicarbonate: step 1/1. It participates in pyrimidine metabolism; UMP biosynthesis via de novo pathway; (S)-dihydroorotate from bicarbonate: step 1/3. Functionally, large subunit of the glutamine-dependent carbamoyl phosphate synthetase (CPSase). CPSase catalyzes the formation of carbamoyl phosphate from the ammonia moiety of glutamine, carbonate, and phosphate donated by ATP, constituting the first step of 2 biosynthetic pathways, one leading to arginine and/or urea and the other to pyrimidine nucleotides. The large subunit (synthetase) binds the substrates ammonia (free or transferred from glutamine from the small subunit), hydrogencarbonate and ATP and carries out an ATP-coupled ligase reaction, activating hydrogencarbonate by forming carboxy phosphate which reacts with ammonia to form carbamoyl phosphate. In Pseudomonas syringae pv. tomato (strain ATCC BAA-871 / DC3000), this protein is Carbamoyl phosphate synthase large chain.